A 72-amino-acid chain; its full sequence is Small proline-rich protein 2B (72 aa).

Residues methionine 1 to proline 11 are compositionally biased toward low complexity. Residues methionine 1–threonine 20 are disordered. 3 tandem repeats follow at residues proline 21–proline 29, proline 30–proline 38, and proline 39–proline 47. A 3 X 9 AA tandem repeats of P-K-C-P-[EQ]-P-C-P-P region spans residues proline 21–proline 47. Residues proline 42–lysine 72 form a disordered region. Positions proline 56–lysine 72 are enriched in pro residues.

The protein belongs to the cornifin (SPRR) family. Suprabasal layers of squamous-differentiated tissues such as epidermis, esophagus, tongue and trachea.

It localises to the cytoplasm. Cross-linked envelope protein of keratinocytes. It is a keratinocyte protein that first appears in the cell cytosol, but ultimately becomes cross-linked to membrane proteins by transglutaminase. All that results in the formation of an insoluble envelope beneath the plasma membrane. This is Small proline-rich protein 2B (SPRR2B) from Homo sapiens (Human).